The primary structure comprises 458 residues: Serine protease Do-like HtrB (458 aa).

The segment covering 1 to 18 (MDYRRDGQNDQHQTEPSH) has biased composition (basic and acidic residues). Residues 1 to 42 (MDYRRDGQNDQHQTEPSHTEQQNTENQKLIGHSEQELLDAPV) form a disordered region. The Cytoplasmic segment spans residues 1–71 (MDYRRDGQND…TAVKKEKKRR (71 aa)). The helical transmembrane segment at 72–92 (AAWLSPILGGIIGGGLMLGIA) threads the bilayer. Over 93-458 (PYLPSDQNQA…LTKQTESSSS (366 aa)) the chain is Extracellular. The tract at residues 146–170 (QTSQNNTFGTGGGSSSESESGTGSG) is disordered. Active-site charge relay system residues include H187, D217, and S298. Residues 296–298 (GNS) and 352–356 (LGVQM) each bind substrate. In terms of domain architecture, PDZ spans 356–440 (MIDMSQVPET…KTTIQVLRKG (85 aa)).

Belongs to the peptidase S1C family.

The protein resides in the cell membrane. It carries out the reaction Acts on substrates that are at least partially unfolded. The cleavage site P1 residue is normally between a pair of hydrophobic residues, such as Val-|-Val.. Its function is as follows. Degrades abnormal exported proteins and responsible for the propeptide processing of a natural pro-protein and for the maturation of a native protein. It also plays a prominent role in stress (heat shock, ethanol, puromycin and NaCl) resistance during active exponential growth. The chain is Serine protease Do-like HtrB (htrB) from Bacillus subtilis (strain 168).